Consider the following 144-residue polypeptide: Universal stress protein A (144 aa).

Belongs to the universal stress protein A family. In terms of assembly, homodimer.

It is found in the cytoplasm. Required for resistance to DNA-damaging agents. This is Universal stress protein A (uspA) from Salmonella typhi.